Reading from the N-terminus, the 572-residue chain is Dityrosine transporter 1 (572 aa).

Disordered regions lie at residues 1–28 and 49–95; these read MGSE…STFH and RANI…SPDT. Residues 1 to 110 lie on the Cytoplasmic side of the membrane; that stretch reads MGSEPFQKKN…YTYFSKDQRL (110 aa). The segment covering 13 to 28 has biased composition (polar residues); sequence LQINSQESGTTRSTFH. The span at 50-62 shows a compositional bias: basic and acidic residues; that stretch reads ANIDHDVFHEHPD. Polar residues predominate over residues 83-95; sequence SSNSQSRDPSPDT. A helical transmembrane segment spans residues 111–131; sequence IIFGIIIFIGFLGPMSGNIYI. Residues 132 to 149 are Extracellular-facing; sequence PALPLLQREYDVSATTIN. Residues 150 to 170 traverse the membrane as a helical segment; that stretch reads ATVSVFMAVFSVGPLFWGALA. At 171 to 184 the chain is on the cytoplasmic side; it reads DFGGRKFLYMVSLS. A helical membrane pass occupies residues 185–205; that stretch reads LMLIVNILLAAVPVNIAALFV. Over 206 to 207 the chain is Extracellular; that stretch reads LR. Residues 208–228 form a helical membrane-spanning segment; that stretch reads IFQAFASSSVISLGAGTVTDV. Residues 229-240 lie on the Cytoplasmic side of the membrane; it reads VPPKHRGKAIAY. Residues 241–261 form a helical membrane-spanning segment; it reads FMMGPNMGPIIAPIVAGLILM. Topologically, residues 262–267 are extracellular; that stretch reads KGNYWR. The chain crosses the membrane as a helical span at residues 268–288; that stretch reads WLFGFTSIMTGIALILVTALL. The Cytoplasmic portion of the chain corresponds to 289-366; that stretch reads PETLRCIVGN…TLYWKMIKCP (78 aa). Residues 367–387 traverse the membrane as a helical segment; that stretch reads PIIITSVSTALLFSSYYAFSV. Residues 388–398 are Extracellular-facing; it reads TFSYYLEHDYR. A helical transmembrane segment spans residues 399-419; it reads FTMLEIGAAYVCPGVAMLLGS. Over 420 to 446 the chain is Cytoplasmic; the sequence is QSGGHLSDYLRSRWIKSHPKKKFPAEF. The helical transmembrane segment at 447 to 469 threads the bilayer; sequence RLLLNLIGILLTICGTIGYGWAI. Residues 470 to 472 lie on the Extracellular side of the membrane; the sequence is FFH. A helical membrane pass occupies residues 473 to 493; it reads YHFVVLLVFSALTAFGMTWCS. The Cytoplasmic portion of the chain corresponds to 494–520; the sequence is NTSMTYLTELFPKRAAGTVAVSSFFRN. Residues 521–541 traverse the membrane as a helical segment; sequence VGAAISSAIILQLCNAMGIGW. Position 542 (Cys-542) is a topological domain, extracellular. The helical transmembrane segment at 543–563 threads the bilayer; that stretch reads FTGLGLCSSISLIGILYLLIF. The interval 548-572 is required for the localization to the prospore membrane; the sequence is LCSSISLIGILYLLIFQRKYTAKEF. Over 564 to 572 the chain is Cytoplasmic; sequence QRKYTAKEF.

This sequence belongs to the major facilitator superfamily. CAR1 family. Phosphorylated.

It localises to the prospore membrane. Its function is as follows. Prospore-specific dityrosine transporter responsible for translocation of dityrosine through the prospore membrane and required for the formation of the outermost layer of the spore. The polypeptide is Dityrosine transporter 1 (DTR1) (Saccharomyces cerevisiae (strain ATCC 204508 / S288c) (Baker's yeast)).